A 601-amino-acid polypeptide reads, in one-letter code: Sulfite reductase [NADPH] flavoprotein alpha-component (601 aa).

The Flavodoxin-like domain occupies 64-202; the sequence is ITLISASQTG…AAAEWRARIV (139 aa). FMN-binding positions include 70–75, 117–120, and 153–162; these read SQTGNA, STQG, and LGDTSYEFFC. One can recognise an FAD-binding FR-type domain in the interval 236–450; it reads EEPLVASLSV…IEHNDNFRLP (215 aa). FAD-binding positions include T324, A358, 388–391, 406–408, and 421–424; these read RLYS, TVG, and GGAS. Residues 521–522, 527–531, and D563 contribute to the NADP(+) site; these read SR and KIYVQ. FAD is bound at residue Y601.

The protein belongs to the NADPH-dependent sulphite reductase flavoprotein subunit CysJ family. It in the N-terminal section; belongs to the flavodoxin family. In the C-terminal section; belongs to the flavoprotein pyridine nucleotide cytochrome reductase family. As to quaternary structure, alpha(8)-beta(8). The alpha component is a flavoprotein, the beta component is a hemoprotein. FAD serves as cofactor. Requires FMN as cofactor.

The enzyme catalyses hydrogen sulfide + 3 NADP(+) + 3 H2O = sulfite + 3 NADPH + 4 H(+). Its pathway is sulfur metabolism; hydrogen sulfide biosynthesis; hydrogen sulfide from sulfite (NADPH route): step 1/1. Component of the sulfite reductase complex that catalyzes the 6-electron reduction of sulfite to sulfide. This is one of several activities required for the biosynthesis of L-cysteine from sulfate. The flavoprotein component catalyzes the electron flow from NADPH -&gt; FAD -&gt; FMN to the hemoprotein component. This is Sulfite reductase [NADPH] flavoprotein alpha-component from Enterobacter sp. (strain 638).